The primary structure comprises 381 residues: Chaperone protein DnaJ (381 aa).

In terms of domain architecture, J spans 5–70 (DFYEVLGVSR…QKKAAYDQYG (66 aa)). Residues 136-214 (GVSKEIEVPT…CHGQGRKQKT (79 aa)) form a CR-type zinc finger. Residues Cys149, Cys152, Cys166, Cys169, Cys188, Cys191, Cys202, and Cys205 each contribute to the Zn(2+) site. CXXCXGXG motif repeat units lie at residues 149–156 (CDTCEGTG), 166–173 (CGTCHGHG), 188–195 (CPTCHGKG), and 202–209 (CNVCHGQG).

This sequence belongs to the DnaJ family. As to quaternary structure, homodimer. Requires Zn(2+) as cofactor.

It is found in the cytoplasm. In terms of biological role, participates actively in the response to hyperosmotic and heat shock by preventing the aggregation of stress-denatured proteins and by disaggregating proteins, also in an autonomous, DnaK-independent fashion. Unfolded proteins bind initially to DnaJ; upon interaction with the DnaJ-bound protein, DnaK hydrolyzes its bound ATP, resulting in the formation of a stable complex. GrpE releases ADP from DnaK; ATP binding to DnaK triggers the release of the substrate protein, thus completing the reaction cycle. Several rounds of ATP-dependent interactions between DnaJ, DnaK and GrpE are required for fully efficient folding. Also involved, together with DnaK and GrpE, in the DNA replication of plasmids through activation of initiation proteins. The polypeptide is Chaperone protein DnaJ (Vibrio vulnificus (strain CMCP6)).